A 78-amino-acid chain; its full sequence is Large ribosomal subunit protein bL28B (78 aa).

The tract at residues 1–29 (MSAHCQVTGRKPGFGNTVSHSHRRSRRRW) is disordered. Basic residues predominate over residues 20-29 (HSHRRSRRRW).

It belongs to the bacterial ribosomal protein bL28 family.

This chain is Large ribosomal subunit protein bL28B (rpmB2), found in Mycobacterium bovis (strain ATCC BAA-935 / AF2122/97).